The chain runs to 201 residues: Large ribosomal subunit protein eL15 (201 aa).

This sequence belongs to the eukaryotic ribosomal protein eL15 family.

This Quercus suber (Cork oak) protein is Large ribosomal subunit protein eL15 (RPL15).